The following is a 217-amino-acid chain: Translation initiation factor 6 (217 aa).

Belongs to the eIF-6 family.

Its function is as follows. Binds to the 50S ribosomal subunit and prevents its association with the 30S ribosomal subunit to form the 70S initiation complex. In Picrophilus torridus (strain ATCC 700027 / DSM 9790 / JCM 10055 / NBRC 100828 / KAW 2/3), this protein is Translation initiation factor 6.